The sequence spans 407 residues: Transmembrane protein 184B (407 aa).

The disordered stretch occupies residues 1-24 (MTVRGAALAPDPASPTTAAASPSI). A run of 7 helical transmembrane segments spans residues 40-60 (FLMTTAAQAISGFFVWTALLI), 84-104 (ILFIVPIYAFDSWLSLLFFTN), 121-141 (LVIYNFLSLCYEYLGGESSIM), 178-198 (LQFCVVKPLMAVSTVVLQAFG), 214-234 (VTIIYNISVSLALYALFLFYF), 249-269 (FFMVKSVIFLSFWQGMLLAIL), and 290-310 (VAAGYQDFIICVEMFFAALAL). Residues 369 to 395 (TLEPGPTWRGGAHGLSRSHSLSGARDN) are disordered. Phosphoserine is present on residues serine 388, serine 402, and serine 403.

It belongs to the TMEM184 family.

The protein resides in the membrane. May activate the MAP kinase signaling pathway. The sequence is that of Transmembrane protein 184B (TMEM184B) from Bos taurus (Bovine).